A 578-amino-acid chain; its full sequence is ATP-dependent RNA helicase CHR1 (578 aa).

A disordered region spans residues 1 to 95 (MDIFRILSRG…NETKAKEEEI (95 aa)). 2 stretches are compositionally biased toward basic and acidic residues: residues 44–53 (EVERETDFFH) and 78–94 (NKEEQMETNETKAKEEE). A Q motif motif is present at residues 131–159 (DMIGRFHINKKVLSNLIDNEFVEPTPIQC). The region spanning 162–339 (IPITLNNRDL…HSIMKDPLRI (178 aa)) is the Helicase ATP-binding domain. 175–182 (APTGSGKT) contacts ATP. A DEAD box motif is present at residues 286–289 (DEAD). In terms of domain architecture, Helicase C-terminal spans 350–514 (TIDQKLVFTG…GYSQWMEDMG (165 aa)). 2 stretches are compositionally biased toward basic and acidic residues: residues 517–531 (SKKEKKQIKTHEIQR) and 561–578 (ESKQESKQESHSNDEREE). The disordered stretch occupies residues 517–578 (SKKEKKQIKT…ESHSNDEREE (62 aa)).

It belongs to the DEAD box helicase family. DDX52/ROK1 subfamily. In terms of assembly, interacts with the U3 snoRNA and is associated with the 90S and 40S pre-ribosomes.

Its subcellular location is the nucleus. It is found in the nucleolus. The catalysed reaction is ATP + H2O = ADP + phosphate + H(+). In terms of biological role, ATP-dependent RNA helicase involved in 40S ribosomal subunit biogenesis. Required for the processing and cleavage of 35S pre-rRNA at sites A0, A1, and A2, leading to mature 18S rRNA. In Candida albicans (strain SC5314 / ATCC MYA-2876) (Yeast), this protein is ATP-dependent RNA helicase CHR1 (CHR1).